A 351-amino-acid polypeptide reads, in one-letter code: Probable dual-specificity RNA methyltransferase RlmN (351 aa).

Catalysis depends on Glu-98, which acts as the Proton acceptor. In terms of domain architecture, Radical SAM core spans 104–332 (TQKRLTVCVS…ASIRRSRGLD (229 aa)). Residues Cys-111 and Cys-337 are joined by a disulfide bond. [4Fe-4S] cluster is bound by residues Cys-118, Cys-122, and Cys-125. S-adenosyl-L-methionine is bound by residues 165-166 (GE), Ser-195, 218-220 (SLH), and Asn-294. Cys-337 (S-methylcysteine intermediate) is an active-site residue.

It belongs to the radical SAM superfamily. RlmN family. [4Fe-4S] cluster serves as cofactor.

It localises to the cytoplasm. The enzyme catalyses adenosine(2503) in 23S rRNA + 2 reduced [2Fe-2S]-[ferredoxin] + 2 S-adenosyl-L-methionine = 2-methyladenosine(2503) in 23S rRNA + 5'-deoxyadenosine + L-methionine + 2 oxidized [2Fe-2S]-[ferredoxin] + S-adenosyl-L-homocysteine. It carries out the reaction adenosine(37) in tRNA + 2 reduced [2Fe-2S]-[ferredoxin] + 2 S-adenosyl-L-methionine = 2-methyladenosine(37) in tRNA + 5'-deoxyadenosine + L-methionine + 2 oxidized [2Fe-2S]-[ferredoxin] + S-adenosyl-L-homocysteine. Specifically methylates position 2 of adenine 2503 in 23S rRNA and position 2 of adenine 37 in tRNAs. This chain is Probable dual-specificity RNA methyltransferase RlmN, found in Acaryochloris marina (strain MBIC 11017).